Here is a 701-residue protein sequence, read N- to C-terminus: Pre-mRNA-splicing factor CLF1 (701 aa).

HAT repeat units follow at residues Ser43 to Glu75, His78 to Ser110, Lys112 to Met144, Lys146 to Arg177, Glu179 to Glu210, Asp214 to Ser253, Glu266 to Asn299, Ser309 to Asn341, Ser343 to Trp378, Asn388 to Arg424, Met545 to Ser576, and Ser601 to Ser642.

It belongs to the crooked-neck family. Associated with the spliceosome.

Its subcellular location is the nucleus. Its function is as follows. Involved in pre-mRNA splicing and cell cycle progression. Required for the spliceosome assembly and initiation of the DNA replication. The sequence is that of Pre-mRNA-splicing factor CLF1 (CLF1) from Candida albicans (strain SC5314 / ATCC MYA-2876) (Yeast).